The following is a 188-amino-acid chain: Abscisic acid receptor PYL8 (188 aa).

The segment at 25-176 is START-like; it reads HELVDNQCSS…NLKSLADISE (152 aa). Cysteines 32 and 157 form a disulfide. Residue Lys-61 participates in abscisate binding. A Phosphothreonine; by CARK1 modification is found at Thr-77. Residues 85–89 carry the Gate loop motif; the sequence is SGLPA. Residues 89–94, 116–122, and Glu-141 contribute to the abscisate site; these read ATRSTE and RLKNYSS. Positions 115-117 match the Latch loop motif; the sequence is HRL.

This sequence belongs to the PYR/PYL/RCAR abscisic acid intracellular receptor family. Monomer. Homodimer. Binds ABA on one subunit only. interacts with ABI1 and HAB1, and possibly with other PP2Cs. Binds to CARs protein in an ABA-independent manner, both at the plasma membrane and in the nucleus. Interacts directly with CAR1 and CAR4. Interacts with MYB44, MYB73 and MYB77 in an ABA-independent manner. Interacts with DDA1. Interacts with CARK1 in the cytosol. Binds to ABI1 when phosphorylated by CARK1. Interacts with AIP1 in the nucleus. Post-translationally, phosphorylated by CARK1 especially in response to abscisic acid (ABA); this phosphorylation promotes its stability and inhibitory ability to ABI1. In terms of processing, ubiquitinated in DDA1- and CDD complex-dependent manner. Ubiquitination leads to its subsequent proteasomal degradation.

The protein resides in the cytoplasm. It is found in the cytosol. The protein localises to the nucleus. It localises to the cell membrane. Receptor for abscisic acid (ABA) required for ABA-mediated responses such as stomatal closure and germination inhibition. Inhibits the activity of group-A protein phosphatases type 2C (PP2Cs) in an ABA-independent manner but more efficiently when activated by ABA. Confers enhanced sensitivity to ABA. Can be activated by both (-)-ABA and (+)-ABA. Mediates crosstalk between ABA and auxin signaling to regulate lateral root growth. Required for lateral root growth suppression by ABA. In response to auxin, promotes lateral root growth by enhancing MYB77-dependent transcription of the auxin-responsive gene IAA19. Enhances the abilities of MYB44 and MYB73 to activate IAA19 gene. In Arabidopsis thaliana (Mouse-ear cress), this protein is Abscisic acid receptor PYL8.